Consider the following 980-residue polypeptide: Putative leucine-rich repeat receptor-like serine/threonine-protein kinase At2g24130 (980 aa).

Residues 1-20 (MDYCSLLVVSFLITVMTVLA) form the signal peptide. At 21–593 (SKENDHELIK…ACKKKHKYPS (573 aa)) the chain is on the extracellular side. Asn55 and Asn88 each carry an N-linked (GlcNAc...) asparagine glycan. LRR repeat units follow at residues 65 to 89 (STQV…IANL), 90 to 113 (TGLT…IGSL), 115 to 138 (ETLK…LGLL), 139 to 162 (NRLV…LFCN), 165 to 189 (SSSL…YHCH), 191 to 214 (KELR…LSNS), 215 to 238 (TNLK…VISK), and 240 to 263 (PQLQ…NLEP). 4 N-linked (GlcNAc...) asparagine glycosylation sites follow: Asn152, Asn162, Asn175, and Asn213. Asn257 and Asn270 each carry an N-linked (GlcNAc...) asparagine glycan. 12 LRR repeats span residues 271 to 295 (SSDL…VRHL), 296 to 320 (SVNL…ISNL), 322 to 344 (NLTL…LCKL), 345 to 370 (SKLE…DIPR), 372 to 391 (GLLD…SFGN), 392 to 416 (LSQL…LGKC), 417 to 440 (INLE…VVSN), 442 to 463 (RNLK…PLEL), 464 to 490 (SKMD…LGSC), 491 to 514 (IALE…LGQL), 515 to 537 (PYLK…SFQQ), and 539 to 563 (STLK…SFSK). Asn322 and Asn327 each carry an N-linked (GlcNAc...) asparagine glycan. N-linked (GlcNAc...) asparagine glycans are attached at residues Asn380 and Asn391. N-linked (GlcNAc...) asparagine glycans are attached at residues Asn428 and Asn449. Asn497 is a glycosylation site (N-linked (GlcNAc...) asparagine). N-linked (GlcNAc...) asparagine glycosylation is found at Asn545 and Asn554. Residues 594–614 (VLLPVLLSLIATPVLCVFGYP) traverse the membrane as a helical segment. At 615 to 980 (LVQRSRFGKN…SQETQGEASS (366 aa)) the chain is on the cytoplasmic side. The residue at position 658 (Thr658) is a Phosphothreonine. The Protein kinase domain occupies 661 to 960 (FNASSLIGSG…HEMGRLKEYL (300 aa)). ATP contacts are provided by residues 667 to 675 (IGSGRFGHV) and Lys689. The residue at position 775 (Tyr775) is a Phosphotyrosine. Asp788 serves as the catalytic Proton acceptor. Position 841 is a phosphotyrosine (Tyr841).

It belongs to the protein kinase superfamily. Ser/Thr protein kinase family.

The protein resides in the cell membrane. The enzyme catalyses L-seryl-[protein] + ATP = O-phospho-L-seryl-[protein] + ADP + H(+). It catalyses the reaction L-threonyl-[protein] + ATP = O-phospho-L-threonyl-[protein] + ADP + H(+). This Arabidopsis thaliana (Mouse-ear cress) protein is Putative leucine-rich repeat receptor-like serine/threonine-protein kinase At2g24130.